A 451-amino-acid chain; its full sequence is MRLLSKQSIERITKILLDELENVRENEQIRNIINSWKPLPSPEKSSIYAVDGSRSVSRLSGTVIYFLSALAVGSGKQLRLSYANAIKSNYGTSDQIVRMQMETLENMLGYLAYRKLEGEKRAILMDGTLTGSLVRPPVYPEDIRSLNVMRALIGESDFENLLNEFLEKLRDHYRKVEEHLEKNGNYDSPILTDNVVEKLRKKYIDTKVIAYGSGKVKVKIPRKALGYSPRVIPIEVLESSRGKSVDELLQELDEEKVELYLGKDDIYDALHMTLSYIEYLYSIDKLLEVKNLAYIAKSFYTKTLARTLGVEIVDTALLDAVIRTLIGHEKEGYLEIEHAVVPPKWSFPDFLLSKFRNIEKLIDKGIHLAYVRFEQGDVIYMLQSTTNIEKILPLILHHKAGGYLRPLQLAHHGVKISYKEARHTLEALINALRNRDPALKIFVKYGRSPLE.

Positions 51 and 126 each coordinate Mn(2+).

This sequence belongs to the NurA family. As to quaternary structure, homodimer. Interacts with HerA. Mn(2+) serves as cofactor.

Its activity is regulated as follows. Exonuclease activity is stimulated in the presence of HerA. In terms of biological role, involved in DNA double-strand break (DSB) repair. Probably acts with HerA to stimulate resection of the 5' strand and produce the long 3' single-strand that is required for RadA loading. Exhibits 5' endonuclease activity and both 5' and 3' exonuclease activities. The polypeptide is DNA double-strand break repair nuclease NurA (Pyrococcus furiosus (strain ATCC 43587 / DSM 3638 / JCM 8422 / Vc1)).